Here is a 37-residue protein sequence, read N- to C-terminus: Large ribosomal subunit protein bL36 (37 aa).

It belongs to the bacterial ribosomal protein bL36 family.

The polypeptide is Large ribosomal subunit protein bL36 (Acidothermus cellulolyticus (strain ATCC 43068 / DSM 8971 / 11B)).